Reading from the N-terminus, the 437-residue chain is Chromosomal replication initiator protein DnaA (437 aa).

The segment at 1–82 (MIFPIWKKCL…KIIINIEKKK (82 aa)) is domain I, interacts with DnaA modulators. Residues 82–101 (KLEKKKCIYKKKNIQIYLHS) are domain II. The tract at residues 102-318 (EINKKYQFHN…GILKKIQILS (217 aa)) is domain III, AAA+ region. The ATP site is built by Gly146, Gly148, Lys149, and Thr150. The domain IV, binds dsDNA stretch occupies residues 319–437 (ILNKEKITIN…FIYLFNQLNA (119 aa)).

The protein belongs to the DnaA family. Oligomerizes as a right-handed, spiral filament on DNA at oriC.

The protein localises to the cytoplasm. In terms of biological role, plays an essential role in the initiation and regulation of chromosomal replication. ATP-DnaA binds to the origin of replication (oriC) to initiate formation of the DNA replication initiation complex once per cell cycle. Binds the DnaA box (a 9 base pair repeat at the origin) and separates the double-stranded (ds)DNA. Forms a right-handed helical filament on oriC DNA; dsDNA binds to the exterior of the filament while single-stranded (ss)DNA is stabiized in the filament's interior. The ATP-DnaA-oriC complex binds and stabilizes one strand of the AT-rich DNA unwinding element (DUE), permitting loading of DNA polymerase. After initiation quickly degrades to an ADP-DnaA complex that is not apt for DNA replication. Binds acidic phospholipids. This chain is Chromosomal replication initiator protein DnaA, found in Buchnera aphidicola subsp. Cinara cedri (strain Cc).